The chain runs to 70 residues: Small ribosomal subunit protein bS21 (70 aa).

The protein belongs to the bacterial ribosomal protein bS21 family.

This chain is Small ribosomal subunit protein bS21, found in Helicobacter pylori (strain P12).